We begin with the raw amino-acid sequence, 482 residues long: tRNA sulfurtransferase (482 aa).

Positions 61 to 165 (LAIRDALTRI…DDRLLLIKGR (105 aa)) constitute a THUMP domain. ATP contacts are provided by residues 183 to 184 (LI), lysine 265, glycine 287, and glutamine 296. Cysteine 344 and cysteine 456 form a disulfide bridge. Residues 404 to 482 (FGPNDVILDI…GFNNVKVYRP (79 aa)) form the Rhodanese domain. Cysteine 456 (cysteine persulfide intermediate) is an active-site residue.

The protein belongs to the ThiI family.

It is found in the cytoplasm. It carries out the reaction [ThiI sulfur-carrier protein]-S-sulfanyl-L-cysteine + a uridine in tRNA + 2 reduced [2Fe-2S]-[ferredoxin] + ATP + H(+) = [ThiI sulfur-carrier protein]-L-cysteine + a 4-thiouridine in tRNA + 2 oxidized [2Fe-2S]-[ferredoxin] + AMP + diphosphate. The catalysed reaction is [ThiS sulfur-carrier protein]-C-terminal Gly-Gly-AMP + S-sulfanyl-L-cysteinyl-[cysteine desulfurase] + AH2 = [ThiS sulfur-carrier protein]-C-terminal-Gly-aminoethanethioate + L-cysteinyl-[cysteine desulfurase] + A + AMP + 2 H(+). Its pathway is cofactor biosynthesis; thiamine diphosphate biosynthesis. Catalyzes the ATP-dependent transfer of a sulfur to tRNA to produce 4-thiouridine in position 8 of tRNAs, which functions as a near-UV photosensor. Also catalyzes the transfer of sulfur to the sulfur carrier protein ThiS, forming ThiS-thiocarboxylate. This is a step in the synthesis of thiazole, in the thiamine biosynthesis pathway. The sulfur is donated as persulfide by IscS. In Escherichia coli (strain K12 / MC4100 / BW2952), this protein is tRNA sulfurtransferase.